A 900-amino-acid polypeptide reads, in one-letter code: Phosphoenolpyruvate carboxylase (900 aa).

Active-site residues include histidine 140 and lysine 568.

It belongs to the PEPCase type 1 family. The cofactor is Mg(2+).

It carries out the reaction oxaloacetate + phosphate = phosphoenolpyruvate + hydrogencarbonate. In terms of biological role, forms oxaloacetate, a four-carbon dicarboxylic acid source for the tricarboxylic acid cycle. In Neisseria gonorrhoeae (strain ATCC 700825 / FA 1090), this protein is Phosphoenolpyruvate carboxylase.